Here is a 412-residue protein sequence, read N- to C-terminus: Squamosa promoter-binding-like protein 2 (412 aa).

The tract at residues 1-81 (MDWDAKMPSW…AAAAGKRARA (81 aa)) is disordered. A compositionally biased stretch (gly residues) spans 18 to 31 (PSGGGGGGGGGGGA). Composition is skewed to low complexity over residues 48–57 (VSAASAAPAA) and 67–81 (SSSSSAAAAGKRARA). An SBP-type zinc finger spans residues 89 to 167 (VPACSVEGCA…DGHNKRRRKP (79 aa)). Zn(2+) contacts are provided by C92, C97, C115, H118, C134, C137, H141, and C153. Positions 150-166 (KRSCRKRLDGHNKRRRK) match the Bipartite nuclear localization signal motif.

In terms of tissue distribution, expressed in stems, leaf sheaths, and young panicles.

Its subcellular location is the nucleus. Functionally, trans-acting factor that binds specifically to the consensus nucleotide sequence 5'-TNCGTACAA-3'. May be involved in panicle development. The polypeptide is Squamosa promoter-binding-like protein 2 (SPL2) (Oryza sativa subsp. japonica (Rice)).